The sequence spans 303 residues: Oxygen-dependent coproporphyrinogen-III oxidase (303 aa).

S93 serves as a coordination point for substrate. The a divalent metal cation site is built by H97 and H107. The Proton donor role is filled by H107. A substrate-binding site is contributed by 109-111; the sequence is NVR. 2 residues coordinate a divalent metal cation: H146 and H176. Positions 241–276 are important for dimerization; the sequence is YVEFNLVYDRGTLFGLQSGGRTESILMSLPPQVRWG. Substrate is bound at residue 259–261; sequence GGR.

It belongs to the aerobic coproporphyrinogen-III oxidase family. As to quaternary structure, homodimer. The cofactor is a divalent metal cation.

It localises to the cytoplasm. It catalyses the reaction coproporphyrinogen III + O2 + 2 H(+) = protoporphyrinogen IX + 2 CO2 + 2 H2O. The protein operates within porphyrin-containing compound metabolism; protoporphyrin-IX biosynthesis; protoporphyrinogen-IX from coproporphyrinogen-III (O2 route): step 1/1. Its function is as follows. Involved in the heme biosynthesis. Catalyzes the aerobic oxidative decarboxylation of propionate groups of rings A and B of coproporphyrinogen-III to yield the vinyl groups in protoporphyrinogen-IX. This is Oxygen-dependent coproporphyrinogen-III oxidase from Pseudomonas putida (strain ATCC 47054 / DSM 6125 / CFBP 8728 / NCIMB 11950 / KT2440).